The following is a 508-amino-acid chain: Ribonuclease Y (508 aa).

Residues 1 to 21 (MMLWYIVAGAGGLLIGYLIAN) traverse the membrane as a helical segment. One can recognise a KH domain in the interval 198-283 (TVSTVSLPSD…EMYEKAKQEV (86 aa)). In terms of domain architecture, HD spans 324-417 (VLNHSIEVAL…VAAADALSAA (94 aa)).

The protein belongs to the RNase Y family.

It localises to the cell membrane. Endoribonuclease that initiates mRNA decay. This chain is Ribonuclease Y, found in Thermotoga maritima (strain ATCC 43589 / DSM 3109 / JCM 10099 / NBRC 100826 / MSB8).